Consider the following 230-residue polypeptide: Cytochrome c oxidase subunit 2 (230 aa).

The Mitochondrial intermembrane segment spans residues 1–14 (MAHPTQLGFKDAAM). The chain crosses the membrane as a helical span at residues 15-45 (PVMEELLHFHDHALMIVLLISTLVLYIITAM). At 46 to 59 (VSTKLTNKYILDSQ) the chain is on the mitochondrial matrix side. The chain crosses the membrane as a helical span at residues 60 to 87 (EIEIVWTILPAVILVLIALPSLRILYLM). Topologically, residues 88-230 (DEINDPHLTI…NWSSLMLEDA (143 aa)) are mitochondrial intermembrane. Cu cation is bound by residues His-161, Cys-196, Glu-198, Cys-200, His-204, and Met-207. Position 198 (Glu-198) interacts with Mg(2+).

It belongs to the cytochrome c oxidase subunit 2 family. As to quaternary structure, component of the cytochrome c oxidase (complex IV, CIV), a multisubunit enzyme composed of 14 subunits. The complex is composed of a catalytic core of 3 subunits MT-CO1, MT-CO2 and MT-CO3, encoded in the mitochondrial DNA, and 11 supernumerary subunits COX4I, COX5A, COX5B, COX6A, COX6B, COX6C, COX7A, COX7B, COX7C, COX8 and NDUFA4, which are encoded in the nuclear genome. The complex exists as a monomer or a dimer and forms supercomplexes (SCs) in the inner mitochondrial membrane with NADH-ubiquinone oxidoreductase (complex I, CI) and ubiquinol-cytochrome c oxidoreductase (cytochrome b-c1 complex, complex III, CIII), resulting in different assemblies (supercomplex SCI(1)III(2)IV(1) and megacomplex MCI(2)III(2)IV(2)). Found in a complex with TMEM177, COA6, COX18, COX20, SCO1 and SCO2. Interacts with TMEM177 in a COX20-dependent manner. Interacts with COX20. Interacts with COX16. Requires Cu cation as cofactor.

It localises to the mitochondrion inner membrane. It catalyses the reaction 4 Fe(II)-[cytochrome c] + O2 + 8 H(+)(in) = 4 Fe(III)-[cytochrome c] + 2 H2O + 4 H(+)(out). Its function is as follows. Component of the cytochrome c oxidase, the last enzyme in the mitochondrial electron transport chain which drives oxidative phosphorylation. The respiratory chain contains 3 multisubunit complexes succinate dehydrogenase (complex II, CII), ubiquinol-cytochrome c oxidoreductase (cytochrome b-c1 complex, complex III, CIII) and cytochrome c oxidase (complex IV, CIV), that cooperate to transfer electrons derived from NADH and succinate to molecular oxygen, creating an electrochemical gradient over the inner membrane that drives transmembrane transport and the ATP synthase. Cytochrome c oxidase is the component of the respiratory chain that catalyzes the reduction of oxygen to water. Electrons originating from reduced cytochrome c in the intermembrane space (IMS) are transferred via the dinuclear copper A center (CU(A)) of subunit 2 and heme A of subunit 1 to the active site in subunit 1, a binuclear center (BNC) formed by heme A3 and copper B (CU(B)). The BNC reduces molecular oxygen to 2 water molecules using 4 electrons from cytochrome c in the IMS and 4 protons from the mitochondrial matrix. This Cyprinus carpio (Common carp) protein is Cytochrome c oxidase subunit 2 (mt-co2).